Reading from the N-terminus, the 954-residue chain is MTTPTEFQFTDYQPYDFANRRHIGPSPAEMAEMLKVIGYNSLEGLIDATLPPAIRQKAPLVWGAPMTEREALDKLRETANKNKVLVSLIGQGYYGTITPPVIQRNILENPAWYTAYTPYQPEISQGRLEALLNYQTMVCDLTGLDIANASLLDEATAAAEGMAMAERVAKSKAKAFFVDADCHPQTIALIRTRAEPLGWSVIVGNPFTDLDPVDVFGAIFQYPGTHGHVHDFTGLIARLHQAGAISVVAADILALTLLKSPGEMGADIAVGSSQRFGVPVGYGGPHAAFMAVRDAIKRAMPGRLVGVSVDARGNRAYRLSLQTREQHIRREKATSNICTAQVLLAVMASMYAVFHGPDGIKAIAQQVHQKAVLMAKGLEKLGYKVEPESFFDTITVDVGHMQGLILRAAVAEGVNLRKVGETKIGMSLDERTRPATLEAVWRAFGGNFTIADFEPSYRLPKALLRTSEYLSHPIFHMNRAESEMTRYIRRLSDRDLALDRAMIPLGSCTMKLNATAEMLPITWPEFSDIHPFVPADQALGYREMLDDLTEKLCAVTGYDAFSMQPNSGAQGEYAGLLTIRNYHIANGEGHRDVCLIPTSAHGTNPASAQMVGMKVVVVKVRENGDIDMEDFRAKAEEHAANLSCCMITYPSTHGVFEETVKEICELVHKHGGQVYLDGANMNAMVGLSRPGDIGSDVSHLNLHKTFCIPHGGGGPGMGPIGVKAHLAPHLPGHPETDGRPGAVSAAPFGSASILPISWSYCLMMGGEGLTQATKVAILNANYIATRLKGAYNVLYKSKTGRVAHECIIDTRPLVDSSGVTVDDVAKRLIDCGFHAPTMSWPVAGTLMIEPTESETKAELDRFCEAMLAIREEARAIEDGRMDKTNNPLKNAPHTVEDLVGEWDRPYSREQACFPPGAFRVDKYWSPVNRVDNVYGDRNLICTCPPVESYAEAAE.

An N6-(pyridoxal phosphate)lysine modification is found at Lys-704.

Belongs to the GcvP family. In terms of assembly, the glycine cleavage system is composed of four proteins: P, T, L and H. Requires pyridoxal 5'-phosphate as cofactor.

The enzyme catalyses N(6)-[(R)-lipoyl]-L-lysyl-[glycine-cleavage complex H protein] + glycine + H(+) = N(6)-[(R)-S(8)-aminomethyldihydrolipoyl]-L-lysyl-[glycine-cleavage complex H protein] + CO2. Functionally, the glycine cleavage system catalyzes the degradation of glycine. The P protein binds the alpha-amino group of glycine through its pyridoxal phosphate cofactor; CO(2) is released and the remaining methylamine moiety is then transferred to the lipoamide cofactor of the H protein. The chain is Glycine dehydrogenase (decarboxylating) from Rhizobium etli (strain ATCC 51251 / DSM 11541 / JCM 21823 / NBRC 15573 / CFN 42).